A 500-amino-acid chain; its full sequence is MIKVIVPDFSDKKFSDRWRYCVGTGRLGLALQKEYIDTLKYVKENIDFKYIRGHGLLCDDVGIYREDVVGDEIKPFYNFTYIDRIFDSFLEIGIRPFVEIGFMPKRLASGTQAVFYWEGNVTPPKDYKKWENLIKAVVSHFISRYGIDEVAKWPFEIWNEPNLKEFWKDADEKEYFKLYKITAKAIKEVNENIKVGGPAICGGADYWIEDFLNFCYEENVPVDFVSRHAYTSKQGEYTPHLIYQEIMPSEYMLNEFKTVRDIIKNSHFPNLPFHITEYNTSYSPQNPVHDTPFNAAYIARILSEGGDYVDSFSYWTFSDVFEERDVPRSQFHGGFGLVALNMVPKPTFYTFKFFNAMGEEMLYRDEHMIVTRRDDGSVALIAWNEVMDKTENPDKEYEVQIPVGFKDVFIKRQLIDEEHGNPWGTWIHMGRPRYPSKKEINTLREIAKPEIMTSHAVTNDGYLNLKFKLAKNAVVLYELTERIDESSTYIGLDDSKINGY.

Residue Glu160 is the Proton donor of the active site. Catalysis depends on Glu277, which acts as the Nucleophile.

Belongs to the glycosyl hydrolase 39 family.

The catalysed reaction is Hydrolysis of (1-&gt;4)-beta-D-xylans, to remove successive D-xylose residues from the non-reducing termini.. This is Beta-xylosidase (xynB) from Thermoanaerobacterium saccharolyticum (strain DSM 8691 / JW/SL-YS485).